A 320-amino-acid chain; its full sequence is o-succinylbenzoate synthase (320 aa).

Lys133 functions as the Proton donor in the catalytic mechanism. The Mg(2+) site is built by Asp161, Glu190, and Asp213. The Proton acceptor role is filled by Lys235.

It belongs to the mandelate racemase/muconate lactonizing enzyme family. MenC type 1 subfamily. A divalent metal cation serves as cofactor.

It catalyses the reaction (1R,6R)-6-hydroxy-2-succinyl-cyclohexa-2,4-diene-1-carboxylate = 2-succinylbenzoate + H2O. Its pathway is quinol/quinone metabolism; 1,4-dihydroxy-2-naphthoate biosynthesis; 1,4-dihydroxy-2-naphthoate from chorismate: step 4/7. It functions in the pathway quinol/quinone metabolism; menaquinone biosynthesis. Its function is as follows. Converts 2-succinyl-6-hydroxy-2,4-cyclohexadiene-1-carboxylate (SHCHC) to 2-succinylbenzoate (OSB). This is o-succinylbenzoate synthase from Salmonella paratyphi B (strain ATCC BAA-1250 / SPB7).